Reading from the N-terminus, the 390-residue chain is Na(+)/H(+) antiporter NhaA (390 aa).

The next 11 helical transmembrane spans lie at 13-33, 61-81, 99-119, 129-149, 158-178, 181-201, 209-229, 259-279, 297-317, 330-350, and 367-387; these read FQLEAASGLVLLIAAIIALVI, LSVHHWINDLLMAIFFFFVTL, LLPIIGAVGGMVVPALVYVFI, GWAIPSATDIAFSLGILSLLG, VFLTALAIIDDLGAILIIAFF, GDLSISYLSLILISYILLLTL, FIPYLIIGAFMWFFTYKSGIH, AISPYVAFIIMPIFAFANAGV, ILLGLFVGKQVGVMVVSFIAV, WLSLYGVSILTGVGFTMSLFV, and IGVLAGSLLSTVFGYFILLYA.

This sequence belongs to the NhaA Na(+)/H(+) (TC 2.A.33) antiporter family.

The protein localises to the cell inner membrane. It carries out the reaction Na(+)(in) + 2 H(+)(out) = Na(+)(out) + 2 H(+)(in). In terms of biological role, na(+)/H(+) antiporter that extrudes sodium in exchange for external protons. The protein is Na(+)/H(+) antiporter NhaA of Pelagibacter ubique (strain HTCC1062).